Consider the following 278-residue polypeptide: S-formylglutathione hydrolase YeiG (278 aa).

Residues Ser-145, Asp-223, and His-256 each act as charge relay system in the active site.

The protein belongs to the esterase D family.

The catalysed reaction is S-formylglutathione + H2O = formate + glutathione + H(+). In terms of biological role, serine hydrolase involved in the detoxification of formaldehyde. Hydrolyzes S-formylglutathione to glutathione and formate. The protein is S-formylglutathione hydrolase YeiG (yeiG) of Escherichia coli (strain UTI89 / UPEC).